The following is a 1357-amino-acid chain: DNA-directed RNA polymerase subunit beta (1357 aa).

It belongs to the RNA polymerase beta chain family. The RNAP catalytic core consists of 2 alpha, 1 beta, 1 beta' and 1 omega subunit. When a sigma factor is associated with the core the holoenzyme is formed, which can initiate transcription.

The catalysed reaction is RNA(n) + a ribonucleoside 5'-triphosphate = RNA(n+1) + diphosphate. Its function is as follows. DNA-dependent RNA polymerase catalyzes the transcription of DNA into RNA using the four ribonucleoside triphosphates as substrates. The polypeptide is DNA-directed RNA polymerase subunit beta (Pseudomonas putida (strain W619)).